We begin with the raw amino-acid sequence, 494 residues long: MADAATQLPWEAVIGLETHVQLGTDSKIFTAASTTFGDEPNTHIDPVVCGLPGTLPVLNQKVLEYAVKAAMALNLNIAEHSKFDRKQYFYPDLPKNYQISQFDQPIAEEGWIEVEVAEKGKDTYLKTIGIERLHMEEDAGKLVHAGSDRLAGSTHSLVDYNRAGVALAEIVSKPDLRTGREAAEYASEIRRIMRYLGVSDGNMQEGSLRCDVNISVRRGPDAPFGTKVEIKNMNSFSAIQKAVDYEIKRQVKAYETGEPVVQETRLWDEGKQLTKSMRSKEGASDYRYFPDPDLGPIEVSPEQREGWRAELPELPAAKRHRYADDLGLSQYDARVLTDERQMADYFEAVVTAGADAKLSANWITGDLAAYVNSNRLSFAALPFRPEQLSEMVQLIDGGKISGKIAKEILPELLEKGGSPKAIVDERGLGMISDPAAIEAIVDELLGAHPEEVEAFRGGKTKLQGFFVGQLMKKTGGKADPKLANQILSQKLKGG.

This sequence belongs to the GatB/GatE family. GatB subfamily. As to quaternary structure, heterotrimer of A, B and C subunits.

The enzyme catalyses L-glutamyl-tRNA(Gln) + L-glutamine + ATP + H2O = L-glutaminyl-tRNA(Gln) + L-glutamate + ADP + phosphate + H(+). It carries out the reaction L-aspartyl-tRNA(Asn) + L-glutamine + ATP + H2O = L-asparaginyl-tRNA(Asn) + L-glutamate + ADP + phosphate + 2 H(+). Allows the formation of correctly charged Asn-tRNA(Asn) or Gln-tRNA(Gln) through the transamidation of misacylated Asp-tRNA(Asn) or Glu-tRNA(Gln) in organisms which lack either or both of asparaginyl-tRNA or glutaminyl-tRNA synthetases. The reaction takes place in the presence of glutamine and ATP through an activated phospho-Asp-tRNA(Asn) or phospho-Glu-tRNA(Gln). The protein is Aspartyl/glutamyl-tRNA(Asn/Gln) amidotransferase subunit B of Synechococcus sp. (strain CC9902).